The sequence spans 137 residues: 15.7 kDa heat shock protein, peroxisomal (137 aa).

In terms of domain architecture, sHSP spans 15–134 (QEWSRSTALI…SSKVRNVNIT (120 aa)). The Microbody targeting signal motif lies at 135–137 (SKL).

The protein belongs to the small heat shock protein (HSP20) family. In terms of assembly, may form oligomeric structures.

Its subcellular location is the peroxisome. In terms of biological role, possesses chaperone activity. This is 15.7 kDa heat shock protein, peroxisomal (HSP15.7) from Arabidopsis thaliana (Mouse-ear cress).